Here is a 341-residue protein sequence, read N- to C-terminus: tRNA N6-adenosine threonylcarbamoyltransferase (341 aa).

Fe cation contacts are provided by His-114 and His-118. Residues 136 to 140 (LVSGG), Asp-169, Gly-182, Asp-186, and Asn-278 contribute to the substrate site. Residue Asp-304 participates in Fe cation binding.

This sequence belongs to the KAE1 / TsaD family. Requires Fe(2+) as cofactor.

The protein resides in the cytoplasm. The enzyme catalyses L-threonylcarbamoyladenylate + adenosine(37) in tRNA = N(6)-L-threonylcarbamoyladenosine(37) in tRNA + AMP + H(+). Functionally, required for the formation of a threonylcarbamoyl group on adenosine at position 37 (t(6)A37) in tRNAs that read codons beginning with adenine. Is involved in the transfer of the threonylcarbamoyl moiety of threonylcarbamoyl-AMP (TC-AMP) to the N6 group of A37, together with TsaE and TsaB. TsaD likely plays a direct catalytic role in this reaction. This Lactococcus lactis subsp. cremoris (strain SK11) protein is tRNA N6-adenosine threonylcarbamoyltransferase.